The primary structure comprises 853 residues: Leucine--tRNA ligase (853 aa).

Residues 42-52 (PYPSGNLHMGH) carry the 'HIGH' region motif. Positions 615 to 619 (KMSKS) match the 'KMSKS' region motif. Lys618 is a binding site for ATP.

This sequence belongs to the class-I aminoacyl-tRNA synthetase family.

The protein resides in the cytoplasm. The catalysed reaction is tRNA(Leu) + L-leucine + ATP = L-leucyl-tRNA(Leu) + AMP + diphosphate. The chain is Leucine--tRNA ligase from Crocosphaera subtropica (strain ATCC 51142 / BH68) (Cyanothece sp. (strain ATCC 51142)).